A 198-amino-acid chain; its full sequence is Ribosome maturation factor RimP (198 aa).

Belongs to the RimP family.

Its subcellular location is the cytoplasm. Its function is as follows. Required for maturation of 30S ribosomal subunits. The protein is Ribosome maturation factor RimP of Rhizobium etli (strain ATCC 51251 / DSM 11541 / JCM 21823 / NBRC 15573 / CFN 42).